The sequence spans 185 residues: Ribosome-recycling factor (185 aa).

Belongs to the RRF family.

The protein localises to the cytoplasm. Responsible for the release of ribosomes from messenger RNA at the termination of protein biosynthesis. May increase the efficiency of translation by recycling ribosomes from one round of translation to another. The chain is Ribosome-recycling factor from Methylococcus capsulatus (strain ATCC 33009 / NCIMB 11132 / Bath).